The primary structure comprises 412 residues: Zinc finger protein 260 (412 aa).

13 consecutive C2H2-type zinc fingers follow at residues tyrosine 27–histidine 49, histidine 55–histidine 77, tyrosine 83–histidine 105, tyrosine 136–histidine 158, phenylalanine 164–histidine 186, phenylalanine 192–histidine 214, tyrosine 220–histidine 242, tyrosine 248–histidine 270, tyrosine 276–histidine 298, tyrosine 304–histidine 326, tyrosine 332–histidine 354, tyrosine 360–histidine 382, and tyrosine 388–histidine 412.

Belongs to the krueppel C2H2-type zinc-finger protein family. In terms of assembly, binds DNA. Interacts with GATA4.

It is found in the nucleus. Transcription factor that acts as a cardiac regulator and an effector of alpha1-adrenergic signaling. Binds to PE response elements (PERE) present in the promoter of genes such as ANF/NPPA and acts as a direct transcriptional activator of NPPA. Also acts as a cofactor with GATA4, a key cardiac regulator. The chain is Zinc finger protein 260 (ZNF260) from Homo sapiens (Human).